Consider the following 826-residue polypeptide: Putative pentatricopeptide repeat-containing protein At1g13630 (826 aa).

PPR repeat units follow at residues 228-262 (NEHT…DIGP), 263-297 (SVVS…GLVP), 298-332 (SVYS…GVEP), 333-367 (DSVT…GLSP), 368-402 (DVIT…GFEL), 404-438 (SIIP…GLSP), 439-473 (DLVA…RILP), 474-508 (NSRT…GETL), 509-543 (DIVL…GITP), 544-578 (SVAT…GLAP), 579-613 (SVVS…GIPP), 614-648 (TNVT…KCKQ), 661-695 (DQIT…NLDA), 696-730 (SSAT…NVSL), 731-765 (SKFA…GFNV), and 766-800 (SIRD…GISP).

The protein belongs to the PPR family. P subfamily.

The chain is Putative pentatricopeptide repeat-containing protein At1g13630 from Arabidopsis thaliana (Mouse-ear cress).